The primary structure comprises 272 residues: Shikimate dehydrogenase (NADP(+)) (272 aa).

Residues 14–16 (SRS) and Thr-61 contribute to the shikimate site. Catalysis depends on Lys-65, which acts as the Proton acceptor. Position 77 (Glu-77) interacts with NADP(+). The shikimate site is built by Asn-86 and Asp-102. NADP(+) contacts are provided by residues 126–130 (GVGGA), 149–154 (NRTFPR), and Met-213. Position 215 (Tyr-215) interacts with shikimate. Gly-237 serves as a coordination point for NADP(+).

It belongs to the shikimate dehydrogenase family. Homodimer.

The enzyme catalyses shikimate + NADP(+) = 3-dehydroshikimate + NADPH + H(+). The protein operates within metabolic intermediate biosynthesis; chorismate biosynthesis; chorismate from D-erythrose 4-phosphate and phosphoenolpyruvate: step 4/7. Functionally, involved in the biosynthesis of the chorismate, which leads to the biosynthesis of aromatic amino acids. Catalyzes the reversible NADPH linked reduction of 3-dehydroshikimate (DHSA) to yield shikimate (SA). This is Shikimate dehydrogenase (NADP(+)) from Sodalis glossinidius (strain morsitans).